The chain runs to 241 residues: Viral CASP8 and FADD-like apoptosis regulator (241 aa).

2 consecutive DED domains span residues 8–78 (PSLP…SRFG) and 95–175 (RYRK…QLVE). The disordered stretch occupies residues 212–241 (CMPVQESSDSPELLRTPVQESSSDSPEQTT). The segment covering 229-241 (VQESSSDSPEQTT) has biased composition (polar residues).

Associates with the death-inducing signaling complex (DISC) formed by TNFRSF6/FAS, FADD and CASP8. Interacts with FADD. Interacts with host TRAF2. Interacts with host NEMO/IKBKG (via N-terminus). Interacts with host SH3BP4; this interaction plays an important in the suppression of host autophagy.

The protein resides in the host cytoplasm. It is found in the host nucleus. In terms of biological role, inhibits TNFRSF1A, TNFRSF6/FAS and TNFRSF12 induced apoptosis. Directs the degradation of host NFKBIB but not NFKBIA. Also suppresses host NF-kappa-B activation by interacting with and preventing ubiquitination of host NEMO/IKBKG, the NF-kappa-B essential modulator subunit of the IKK complex. Interferes with host CASP8/caspase-8 recruitment and activation at the death-inducing signaling complex (DISC). May lead to higher virus production and contribute to virus persistence and oncogenicity. Also participates in the inhibition of host autophagy by interacting with host SH3BP4. The protein is Viral CASP8 and FADD-like apoptosis regulator of Homo sapiens (Human).